Reading from the N-terminus, the 88-residue chain is Sec-independent protein translocase protein TatA (88 aa).

The chain crosses the membrane as a helical span at residues 1 to 21; it reads MGGISIWQLLIIAVIVVLLFG. A disordered region spans residues 41-88; the sequence is KAMGDENQKETNNAEKTTNDADFDTKNLAQKTSTEEKSTTESKNKEQV. 2 stretches are compositionally biased toward basic and acidic residues: residues 42–65 and 73–88; these read AMGDENQKETNNAEKTTNDADFDT and STEEKSTTESKNKEQV.

This sequence belongs to the TatA/E family. In terms of assembly, the Tat system comprises two distinct complexes: a TatABC complex, containing multiple copies of TatA, TatB and TatC subunits, and a separate TatA complex, containing only TatA subunits. Substrates initially bind to the TatABC complex, which probably triggers association of the separate TatA complex to form the active translocon.

It is found in the cell inner membrane. In terms of biological role, part of the twin-arginine translocation (Tat) system that transports large folded proteins containing a characteristic twin-arginine motif in their signal peptide across membranes. TatA could form the protein-conducting channel of the Tat system. This is Sec-independent protein translocase protein TatA from Proteus mirabilis (strain HI4320).